Reading from the N-terminus, the 581-residue chain is Phosphoglucomutase, cytoplasmic (581 aa).

The segment covering 1–11 (MVFSVAKKDTT) has biased composition (basic and acidic residues). Residues 1 to 20 (MVFSVAKKDTTPYEGQKPGT) form a disordered region. The alpha-D-glucose 1,6-bisphosphate site is built by Arg-24 and Ser-123. Ser-123 (phosphoserine intermediate) is an active-site residue. Mg(2+) is bound by residues Ser-123, Asp-298, Asp-300, and Asp-302. A Phosphoserine modification is found at Ser-123. Alpha-D-glucose 1,6-bisphosphate is bound by residues Asp-302, Arg-303, Thr-366, Glu-385, Ser-387, and Lys-398.

It belongs to the phosphohexose mutase family. As to quaternary structure, monomer. It depends on Mg(2+) as a cofactor.

It is found in the cytoplasm. It catalyses the reaction alpha-D-glucose 1-phosphate = alpha-D-glucose 6-phosphate. The enzyme catalyses O-phospho-L-seryl-[protein] + alpha-D-glucose 1-phosphate = alpha-D-glucose 1,6-bisphosphate + L-seryl-[protein]. The catalysed reaction is alpha-D-glucose 1,6-bisphosphate + L-seryl-[protein] = O-phospho-L-seryl-[protein] + alpha-D-glucose 6-phosphate. Catalyzes the reversible isomerization of alpha-D-glucose 1-phosphate to alpha-D-glucose 6-phosphate. The mechanism proceeds via the intermediate compound alpha-D-glucose 1,6-bisphosphate. This enzyme participates in both the breakdown and synthesis of glucose. This chain is Phosphoglucomutase, cytoplasmic (PGM1), found in Bromus inermis (Smooth brome grass).